A 541-amino-acid polypeptide reads, in one-letter code: Copper transport protein CutJ (541 aa).

Residues 1 to 25 (MKRNRWWIILLLFLVFLPKTSFAHA) form the signal peptide. Positions 24 and 110 each coordinate Cu cation. 8 consecutive transmembrane segments (helical) span residues 146–166 (AILY…LFWY), 180–200 (ILTG…PIQT), 228–248 (SIWI…IPAI), 262–282 (PLIF…AAVV), 293–313 (FLHL…VLLL), 335–355 (WALT…FFII), 370–390 (LLVK…HFLL), and 407–427 (WAIG…PSPP).

In the N-terminal section; belongs to the CopC family. It in the C-terminal section; belongs to the CopD family.

Its subcellular location is the cell membrane. Its function is as follows. Involved in uptake of extracellular oxidized copper under copper-limiting conditions. This Bacillus subtilis (strain 168) protein is Copper transport protein CutJ.